The sequence spans 386 residues: Ribosomal RNA small subunit methyltransferase H (386 aa).

Residues 97 to 99, D116, Y143, D167, and Q174 contribute to the S-adenosyl-L-methionine site; that span reads GGH.

This sequence belongs to the methyltransferase superfamily. RsmH family.

It is found in the cytoplasm. The catalysed reaction is cytidine(1402) in 16S rRNA + S-adenosyl-L-methionine = N(4)-methylcytidine(1402) in 16S rRNA + S-adenosyl-L-homocysteine + H(+). In terms of biological role, specifically methylates the N4 position of cytidine in position 1402 (C1402) of 16S rRNA. The polypeptide is Ribosomal RNA small subunit methyltransferase H (Mycobacterium avium (strain 104)).